The following is a 175-amino-acid chain: MMTYIAFILSTILVVSFVGFSSKPSPIYGGLGLIVSGGVGCGIVLNYGGSFLGLMVFLIYLGGMLVVFGYTTAMAMEEYPEVWVSNKTVLSLFVLGFMAELLFAGYCISDEKLEIVLNFNGQGDWVIYDTGDSGFFSEEAMGIAALYSYGTWLVIVTGWSLVIGVLVVMEITRGN.

The next 5 helical transmembrane spans lie at 1 to 21, 25 to 45, 48 to 68, 88 to 108, and 149 to 169; these read MMTYIAFILSTILVVSFVGFS, SPIYGGLGLIVSGGVGCGIVL, GGSFLGLMVFLIYLGGMLVVF, TVLSLFVLGFMAELLFAGYCI, and YGTWLVIVTGWSLVIGVLVVM.

Belongs to the complex I subunit 6 family. As to quaternary structure, core subunit of respiratory chain NADH dehydrogenase (Complex I) which is composed of 45 different subunits.

Its subcellular location is the mitochondrion inner membrane. The enzyme catalyses a ubiquinone + NADH + 5 H(+)(in) = a ubiquinol + NAD(+) + 4 H(+)(out). Core subunit of the mitochondrial membrane respiratory chain NADH dehydrogenase (Complex I) which catalyzes electron transfer from NADH through the respiratory chain, using ubiquinone as an electron acceptor. Essential for the catalytic activity and assembly of complex I. The polypeptide is NADH-ubiquinone oxidoreductase chain 6 (MT-ND6) (Urotrichus talpoides (Japanese shrew mole)).